A 67-amino-acid chain; its full sequence is ATP synthase F(0) complex subunit 8 (67 aa).

The chain crosses the membrane as a helical span at residues 8–24 (PWFITILSMIITLFILF). At lysine 54 the chain carries N6-acetyllysine; alternate. Residue lysine 54 is modified to N6-succinyllysine; alternate. N6-acetyllysine is present on lysine 57.

The protein belongs to the ATPase protein 8 family. As to quaternary structure, component of the ATP synthase complex composed at least of ATP5F1A/subunit alpha, ATP5F1B/subunit beta, ATP5MC1/subunit c (homooctomer), MT-ATP6/subunit a, MT-ATP8/subunit 8, ATP5ME/subunit e, ATP5MF/subunit f, ATP5MG/subunit g, ATP5MK/subunit k, ATP5MJ/subunit j, ATP5F1C/subunit gamma, ATP5F1D/subunit delta, ATP5F1E/subunit epsilon, ATP5PF/subunit F6, ATP5PB/subunit b, ATP5PD/subunit d, ATP5PO/subunit OSCP. ATP synthase complex consists of a soluble F(1) head domain (subunits alpha(3) and beta(3)) - the catalytic core - and a membrane F(0) domain - the membrane proton channel (subunits c, a, 8, e, f, g, k and j). These two domains are linked by a central stalk (subunits gamma, delta, and epsilon) rotating inside the F1 region and a stationary peripheral stalk (subunits F6, b, d, and OSCP). Interacts with PRICKLE3.

The protein resides in the mitochondrion membrane. In terms of biological role, subunit 8, of the mitochondrial membrane ATP synthase complex (F(1)F(0) ATP synthase or Complex V) that produces ATP from ADP in the presence of a proton gradient across the membrane which is generated by electron transport complexes of the respiratory chain. ATP synthase complex consist of a soluble F(1) head domain - the catalytic core - and a membrane F(1) domain - the membrane proton channel. These two domains are linked by a central stalk rotating inside the F(1) region and a stationary peripheral stalk. During catalysis, ATP synthesis in the catalytic domain of F(1) is coupled via a rotary mechanism of the central stalk subunits to proton translocation. In vivo, can only synthesize ATP although its ATP hydrolase activity can be activated artificially in vitro. Part of the complex F(0) domain. This is ATP synthase F(0) complex subunit 8 from Orycteropus afer (Aardvark).